Reading from the N-terminus, the 626-residue chain is Protein ALEX (626 aa).

4 disordered regions span residues 1–29 (MMAR…LEPM), 173–223 (TTAH…AAHP), 236–473 (AAPG…APRS), and 556–612 (AASV…NNSR). Composition is skewed to polar residues over residues 186–195 (KSTAAASSRQ) and 255–270 (GSTT…QSRL). A compositionally biased stretch (basic and acidic residues) spans 281 to 312 (QIRESEQRDPQLRRKQQRWKEPLMPRREEKYP). The segment covering 337–346 (QPILTPGQPQ) has biased composition (low complexity). A compositionally biased stretch (pro residues) spans 366–399 (IPTPGQPLPPQPIPTPGRPLTPQPIPTPGRPLTP). A compositionally biased stretch (low complexity) spans 416–435 (RLLRPGQPMSPQLRQTQGLP). Pro residues predominate over residues 436-445 (LPQPLLPPGQ). A compositionally biased stretch (basic residues) spans 570–579 (ALSRSRRYPW). Residues 600-611 (RRNAVSSSTNNS) show a composition bias toward polar residues.

Belongs to the ALEX family. Interacts with the N-terminal region of the XLas isoforms of guanine nucleotide-binding protein G(s) subunit alpha.

The protein resides in the cell membrane. Its subcellular location is the cell projection. It is found in the ruffle. Its function is as follows. May inhibit the adenylyl cyclase-stimulating activity of guanine nucleotide-binding protein G(s) subunit alpha which is produced from the same locus in a different open reading frame. The protein is Protein ALEX of Homo sapiens (Human).